Reading from the N-terminus, the 498-residue chain is L-amino acid oxidase Bs29 (498 aa).

Residues 1–3 form the signal peptide; that stretch reads SCA. A disulfide bridge links C12 with C175. Residues 45-46, 65-66, R73, and 89-92 each bind FAD; these read MS, EA, and GPMR. R92 lines the substrate pocket. N174 is a glycosylation site (N-linked (GlcNAc...) asparagine). Substrate is bound at residue H225. V263 contributes to the FAD binding site. The cysteines at positions 333 and 414 are disulfide-linked. Y374 lines the substrate pocket. Residues E459 and 466–471 each bind FAD; that span reads GWIDST. 466 to 467 serves as a coordination point for substrate; sequence GW.

Belongs to the flavin monoamine oxidase family. FIG1 subfamily. As to quaternary structure, monomer. This is in contrast with most of its orthologs, that are non-covalently linked homodimers. FAD is required as a cofactor. As to expression, expressed by the venom gland.

The protein resides in the secreted. It catalyses the reaction an L-alpha-amino acid + O2 + H2O = a 2-oxocarboxylate + H2O2 + NH4(+). The catalysed reaction is L-leucine + O2 + H2O = 4-methyl-2-oxopentanoate + H2O2 + NH4(+). Its function is as follows. Catalyzes an oxidative deamination of predominantly hydrophobic and aromatic L-amino acids, thus producing hydrogen peroxide that may contribute to the diverse toxic effects of this enzyme. Shows activity on L-Leu. Damage cell membranes of the Gram-positive bacteria S.aureus (MIC=4 ug/ml and MBC=8 ug/ml) and the Gram-negative bacteria A.baumanni (MIC=2 ug/ml and MBC=4 ug/ml). This antibacterial activity is dependent on the production of hydrogen peroxyde, since it is inhibited by catalase, a hydrogen peroxyde scavenger. In Bothriechis schlegelii (Eyelash palm pitviper), this protein is L-amino acid oxidase Bs29.